A 201-amino-acid polypeptide reads, in one-letter code: Large ribosomal subunit protein mL61 (201 aa).

The interval 87–118 is disordered; the sequence is RDDKDAKPSSTPFPTSSADGSSPAPKPAQGER. Residues 94–106 are compositionally biased toward polar residues; the sequence is PSSTPFPTSSADG.

This sequence belongs to the mitochondrion-specific ribosomal protein mL61 family. In terms of assembly, component of the mitochondrial large ribosomal subunit (mt-LSU). Mature N.crassa 74S mitochondrial ribosomes consist of a small (37S) and a large (54S) subunit. The 37S small subunit contains a 16S ribosomal RNA (16S mt-rRNA) and 32 different proteins. The 54S large subunit contains a 23S rRNA (23S mt-rRNA) and 42 different proteins.

Its subcellular location is the mitochondrion. Component of the mitochondrial ribosome (mitoribosome), a dedicated translation machinery responsible for the synthesis of mitochondrial genome-encoded proteins, including at least some of the essential transmembrane subunits of the mitochondrial respiratory chain. The mitoribosomes are attached to the mitochondrial inner membrane and translation products are cotranslationally integrated into the membrane. This chain is Large ribosomal subunit protein mL61 (mrp49), found in Neurospora crassa (strain ATCC 24698 / 74-OR23-1A / CBS 708.71 / DSM 1257 / FGSC 987).